A 205-amino-acid chain; its full sequence is MPVVFVAASKLPTPFATFTMHGFLDEATGREHVVLSLGDIADGQPVLGRLHSECLTGDALFSQRCDCGSQLEAALQAIAREGRGVLLYLRQEGRGIGLLNKIRAYELQDGGADTVEANERLGFAADQRDYAMCLPMLEHLGVKSLRLMTNNPRKVKALTDMNIVVAERVPLHTGHNPHNRYYLATKAGKLGHMLGNEHQGEAPQA.

Position 49 to 53 (49 to 53 (RLHSE)) interacts with GTP. 3 residues coordinate Zn(2+): Cys54, Cys65, and Cys67. GTP contacts are provided by residues Gln70, 92 to 94 (EGR), and Thr114. Asp126 functions as the Proton acceptor in the catalytic mechanism. Arg128 (nucleophile) is an active-site residue. Residues Thr149 and Lys154 each coordinate GTP.

Belongs to the GTP cyclohydrolase II family. Zn(2+) serves as cofactor.

It carries out the reaction GTP + 4 H2O = 2,5-diamino-6-hydroxy-4-(5-phosphoribosylamino)-pyrimidine + formate + 2 phosphate + 3 H(+). The protein operates within cofactor biosynthesis; riboflavin biosynthesis; 5-amino-6-(D-ribitylamino)uracil from GTP: step 1/4. Functionally, catalyzes the conversion of GTP to 2,5-diamino-6-ribosylamino-4(3H)-pyrimidinone 5'-phosphate (DARP), formate and pyrophosphate. This is GTP cyclohydrolase-2 from Pseudomonas putida (strain GB-1).